Reading from the N-terminus, the 193-residue chain is MEPFRIHKGTAAVLMNDNIDTDQIIPKQYLKRIERTGFGKFLFDEWRYDNERHENPNFPLNAPDRKGASILITGDNFGCGSSREHAPWALADYGFRVIIAGGFADIFYMNCMKNGMLPIVMDKDMRENLTKTDAREQIEVDLENEVITTSTHRFHFTIEKMWKEKLLNGLDEISITMQYEQEIREYERKVAVY.

The protein belongs to the LeuD family. LeuD type 1 subfamily. In terms of assembly, heterodimer of LeuC and LeuD.

It catalyses the reaction (2R,3S)-3-isopropylmalate = (2S)-2-isopropylmalate. Its pathway is amino-acid biosynthesis; L-leucine biosynthesis; L-leucine from 3-methyl-2-oxobutanoate: step 2/4. Catalyzes the isomerization between 2-isopropylmalate and 3-isopropylmalate, via the formation of 2-isopropylmaleate. The chain is 3-isopropylmalate dehydratase small subunit from Bacillus cereus (strain ZK / E33L).